We begin with the raw amino-acid sequence, 252 residues long: 5'-nucleotidase SurE (252 aa).

Asp8, Asp9, Ser39, and Asn91 together coordinate a divalent metal cation.

It belongs to the SurE nucleotidase family. A divalent metal cation is required as a cofactor.

It is found in the cytoplasm. The enzyme catalyses a ribonucleoside 5'-phosphate + H2O = a ribonucleoside + phosphate. In terms of biological role, nucleotidase that shows phosphatase activity on nucleoside 5'-monophosphates. The sequence is that of 5'-nucleotidase SurE from Legionella pneumophila (strain Corby).